Consider the following 318-residue polypeptide: B3 domain-containing protein At1g05930 (318 aa).

The segment at residues 201–293 (FNRLISNDFL…VLCFAMRQWR (93 aa)) is a DNA-binding region (TF-B3).

The protein resides in the nucleus. This chain is B3 domain-containing protein At1g05930, found in Arabidopsis thaliana (Mouse-ear cress).